The chain runs to 416 residues: Lactose permease (416 aa).

At 1 to 13 the chain is on the cytoplasmic side; the sequence is MKLSELAPRERHN. A helical transmembrane segment spans residues 14-34; it reads FIYFMLFFFFYYFIMSAYFPF. The Periplasmic segment spans residues 35 to 50; the sequence is FPVWLAEVNHLTKTET. The chain crosses the membrane as a helical span at residues 51-71; sequence GIVFSCISLFAIIFQPVFGLI. Topologically, residues 72-80 are cytoplasmic; the sequence is SDKLGLRKH. A helical membrane pass occupies residues 81–101; it reads LLWTITILLILFAPFFIFVFS. A topological domain (periplasmic) is located at residue P102. A helical transmembrane segment spans residues 103–123; sequence LLQMNIMAGALVGGVYLGIVF. Residues 124–149 are Cytoplasmic-facing; that stretch reads SSRSGAVEAYIERVSRANRFEYGKVR. The next 2 membrane-spanning stretches (helical) occupy residues 150-170 and 171-191; these read VSGC…FSID and PNIT…LLWV. Residues 192–223 are Cytoplasmic-facing; that stretch reads SKPESSNSAEVIDALGANRQAFSMRTAAELFR. The chain crosses the membrane as a helical span at residues 224–244; that stretch reads MPRFWGFIIYVVGVASVYDVF. The Periplasmic portion of the chain corresponds to 245–267; sequence DQQFANFFKGFFSSPQRGTEVFG. The chain crosses the membrane as a helical span at residues 268–288; the sequence is FVTTGGELLNALIMFCAPAII. Topologically, residues 289 to 295 are cytoplasmic; it reads NRIGAKN. Helical transmembrane passes span 296 to 316 and 317 to 337; these read ALLI…FATS and AVEV…LLVG. Residues 338-353 lie on the Cytoplasmic side of the membrane; sequence TFKYISSAFKGKLSAT. The chain crosses the membrane as a helical span at residues 354–374; that stretch reads LFLIGFNLSKQLSSVVLSAWV. Residues 375–384 are Periplasmic-facing; the sequence is GRMYDTVGFH. Residues 385–405 traverse the membrane as a helical segment; the sequence is QAYLILGCITLSFTVISLFTL. Residues 406–416 lie on the Cytoplasmic side of the membrane; that stretch reads KGSKTLLPATA.

It belongs to the major facilitator superfamily. Oligosaccharide:H(+) symporter (OHS) (TC 2.A.1.5) family.

Its subcellular location is the cell inner membrane. The enzyme catalyses lactose(in) + H(+)(in) = lactose(out) + H(+)(out). Functionally, responsible for transport of beta-galactosides into the cell, with the concomitant import of a proton (symport system). This is Lactose permease (lacY) from Klebsiella oxytoca.